Here is a 310-residue protein sequence, read N- to C-terminus: Putative S-adenosyl-L-methionine-dependent methyltransferase MMAR_0357 (310 aa).

S-adenosyl-L-methionine is bound by residues Asp-132 and Asp-161 to Leu-162.

The protein belongs to the UPF0677 family.

Its function is as follows. Exhibits S-adenosyl-L-methionine-dependent methyltransferase activity. This Mycobacterium marinum (strain ATCC BAA-535 / M) protein is Putative S-adenosyl-L-methionine-dependent methyltransferase MMAR_0357.